We begin with the raw amino-acid sequence, 229 residues long: Enolase-phosphatase E1 (229 aa).

This sequence belongs to the HAD-like hydrolase superfamily. MasA/MtnC family. In terms of assembly, monomer. Requires Mg(2+) as cofactor.

It catalyses the reaction 5-methylsulfanyl-2,3-dioxopentyl phosphate + H2O = 1,2-dihydroxy-5-(methylsulfanyl)pent-1-en-3-one + phosphate. It participates in amino-acid biosynthesis; L-methionine biosynthesis via salvage pathway; L-methionine from S-methyl-5-thio-alpha-D-ribose 1-phosphate: step 3/6. Its pathway is amino-acid biosynthesis; L-methionine biosynthesis via salvage pathway; L-methionine from S-methyl-5-thio-alpha-D-ribose 1-phosphate: step 4/6. In terms of biological role, bifunctional enzyme that catalyzes the enolization of 2,3-diketo-5-methylthiopentyl-1-phosphate (DK-MTP-1-P) into the intermediate 2-hydroxy-3-keto-5-methylthiopentenyl-1-phosphate (HK-MTPenyl-1-P), which is then dephosphorylated to form the acireductone 1,2-dihydroxy-3-keto-5-methylthiopentene (DHK-MTPene). This chain is Enolase-phosphatase E1, found in Serratia proteamaculans (strain 568).